Consider the following 626-residue polypeptide: Serine/threonine-protein kinase PknB (626 aa).

Over M1–W332 the chain is Cytoplasmic. One can recognise a Protein kinase domain in the interval Y11–V274. Residues L17–V25, K40, and E93–V95 contribute to the ATP site. Catalysis depends on D138, which acts as the Proton acceptor. ATP-binding positions include K140–N143 and D156. Mg(2+) contacts are provided by N143 and D156. Residues S166 and S169 each carry the phosphoserine; by autocatalysis modification. Phosphothreonine; by autocatalysis is present on residues T171, T173, and T294. S295 bears the Phosphoserine; by autocatalysis mark. Residues S299 to D323 form a disordered region. A Phosphothreonine; by autocatalysis modification is found at T309. Positions P311–D323 are enriched in basic and acidic residues. A helical transmembrane segment spans residues V333 to F353. The Extracellular segment spans residues G354 to Q626. PASTA domains are found at residues I356–T422, G423–S490, G491–K557, and G558–Q626.

This sequence belongs to the protein kinase superfamily. Ser/Thr protein kinase family. As to quaternary structure, homodimer. Post-translationally, autophosphorylated. Dephosphorylated by PstP.

Its subcellular location is the cell membrane. It catalyses the reaction L-seryl-[protein] + ATP = O-phospho-L-seryl-[protein] + ADP + H(+). The catalysed reaction is L-threonyl-[protein] + ATP = O-phospho-L-threonyl-[protein] + ADP + H(+). In terms of biological role, protein kinase that regulates many aspects of mycobacterial physiology. Is a key component of a signal transduction pathway that regulates cell growth, cell shape and cell division via phosphorylation of target proteins. This chain is Serine/threonine-protein kinase PknB (pknB), found in Mycobacterium bovis (strain ATCC BAA-935 / AF2122/97).